A 204-amino-acid chain; its full sequence is Carbon disulfide hydrolase (204 aa).

Zn(2+) is bound by residues cysteine 35, histidine 88, and cysteine 91.

The protein belongs to the beta-class carbonic anhydrase family. Forms a hexadecameric catenane homooligomer, through interactions of two interlocked octameric rings. Exists as both octamers and hexadecamers in solution. Requires Zn(2+) as cofactor.

The catalysed reaction is carbon disulfide + 2 H2O = 2 hydrogen sulfide + CO2 + 2 H(+). It participates in sulfur metabolism; hydrogen sulfide biosynthesis. In terms of biological role, catalyzes the conversion of carbon disulfide into hydrogen sulfide and carbon dioxide, with carbonyl sulfide as an intermediate. Likely plays a key role in sulfur metabolism that allows Acidianus sp. A1-3 to grow on carbon disulfide as the main carbon and energy source. Does not show carbonic anhydrase activity (hydration of CO(2) to carbonate). The protein is Carbon disulfide hydrolase of Acidianus sp. (strain A1-3).